A 203-amino-acid chain; its full sequence is Small ribosomal subunit protein uS4c (203 aa).

A disordered region spans residues 15–43 (LGSLPGLTSKRPRSGSDLRNQSRSGKRSQ). The S4 RNA-binding domain occupies 89–169 (MRLDNILFRL…LPKHLTLHSL (81 aa)).

The protein belongs to the universal ribosomal protein uS4 family. Part of the 30S ribosomal subunit. Contacts protein S5. The interaction surface between S4 and S5 is involved in control of translational fidelity.

It localises to the plastid. Its subcellular location is the chloroplast. Functionally, one of the primary rRNA binding proteins, it binds directly to 16S rRNA where it nucleates assembly of the body of the 30S subunit. In terms of biological role, with S5 and S12 plays an important role in translational accuracy. The protein is Small ribosomal subunit protein uS4c (rps4) of Illicium oligandrum (Star anise).